The following is a 205-amino-acid chain: Putative 3-methyladenine DNA glycosylase (205 aa).

It belongs to the DNA glycosylase MPG family.

This Mycolicibacterium paratuberculosis (strain ATCC BAA-968 / K-10) (Mycobacterium paratuberculosis) protein is Putative 3-methyladenine DNA glycosylase.